We begin with the raw amino-acid sequence, 154 residues long: NADPH-dependent 7-cyano-7-deazaguanine reductase (154 aa).

Cys-52 acts as the Thioimide intermediate in catalysis. Asp-59 functions as the Proton donor in the catalytic mechanism. Substrate-binding positions include 74–76 (VES) and 93–94 (HE).

This sequence belongs to the GTP cyclohydrolase I family. QueF type 1 subfamily.

The protein localises to the cytoplasm. The catalysed reaction is 7-aminomethyl-7-carbaguanine + 2 NADP(+) = 7-cyano-7-deazaguanine + 2 NADPH + 3 H(+). It functions in the pathway tRNA modification; tRNA-queuosine biosynthesis. Its function is as follows. Catalyzes the NADPH-dependent reduction of 7-cyano-7-deazaguanine (preQ0) to 7-aminomethyl-7-deazaguanine (preQ1). The protein is NADPH-dependent 7-cyano-7-deazaguanine reductase of Sinorhizobium medicae (strain WSM419) (Ensifer medicae).